Reading from the N-terminus, the 342-residue chain is N-acetyl-gamma-glutamyl-phosphate reductase (342 aa).

The active site involves Cys-147.

This sequence belongs to the NAGSA dehydrogenase family. Type 1 subfamily.

Its subcellular location is the cytoplasm. The catalysed reaction is N-acetyl-L-glutamate 5-semialdehyde + phosphate + NADP(+) = N-acetyl-L-glutamyl 5-phosphate + NADPH + H(+). It participates in amino-acid biosynthesis; L-arginine biosynthesis; N(2)-acetyl-L-ornithine from L-glutamate: step 3/4. In terms of biological role, catalyzes the NADPH-dependent reduction of N-acetyl-5-glutamyl phosphate to yield N-acetyl-L-glutamate 5-semialdehyde. The sequence is that of N-acetyl-gamma-glutamyl-phosphate reductase from Campylobacter jejuni (strain RM1221).